We begin with the raw amino-acid sequence, 1183 residues long: PAN2-PAN3 deadenylation complex catalytic subunit PAN2 (1183 aa).

2 WD repeats span residues 150-189 (SIENSSPVVKLAPLHRTVLAAGLSGQVTVLDPRTGFKAAQ) and 289-328 (DVSSYITSMALSSRGDYLAFGDGDGQLHVWTTNETGENAA). The interval 331–478 (ENGSIVLPPF…EEIEEELNDG (148 aa)) is linker. Positions 439–470 (AEGRARGKGRRDSGPRFRSEKDKKGTYKDKEE) are disordered. Residues 448 to 469 (RRDSGPRFRSEKDKKGTYKDKE) show a composition bias toward basic and acidic residues. A USP domain is found at 479-864 (EVPKYYRKVE…VPAVIILERE (386 aa)). The 170-residue stretch at 916–1085 (VAIDAEFVAL…HDSIEDAHFA (170 aa)) folds into the Exonuclease domain. Aspartate 919, glutamate 921, aspartate 1028, and aspartate 1081 together coordinate a divalent metal cation. The interval 1155 to 1183 (KSRMATPPPPTKLGLPQWASQNSPSPLRR) is disordered. Residues 1172 to 1183 (WASQNSPSPLRR) show a composition bias toward polar residues.

The protein belongs to the peptidase C19 family. PAN2 subfamily. In terms of assembly, forms a heterotrimer with an asymmetric homodimer of the regulatory subunit PAN3 to form the poly(A)-nuclease (PAN) deadenylation complex. Requires a divalent metal cation as cofactor.

Its subcellular location is the cytoplasm. The enzyme catalyses Exonucleolytic cleavage of poly(A) to 5'-AMP.. With respect to regulation, positively regulated by the regulatory subunit PAN3. Functionally, catalytic subunit of the poly(A)-nuclease (PAN) deadenylation complex, one of two cytoplasmic mRNA deadenylases involved in mRNA turnover. PAN specifically shortens poly(A) tails of RNA and the activity is stimulated by poly(A)-binding protein PAB1. PAN deadenylation is followed by rapid degradation of the shortened mRNA tails by the CCR4-NOT complex. Deadenylated mRNAs are then degraded by two alternative mechanisms, namely exosome-mediated 3'-5' exonucleolytic degradation, or deadenylation-dependent mRNA decaping and subsequent 5'-3' exonucleolytic degradation by XRN1. May also be involved in post-transcriptional maturation of mRNA poly(A) tails. This Cryptococcus neoformans var. neoformans serotype D (strain B-3501A) (Filobasidiella neoformans) protein is PAN2-PAN3 deadenylation complex catalytic subunit PAN2.